We begin with the raw amino-acid sequence, 754 residues long: 5-methyltetrahydropteroyltriglutamate--homocysteine methyltransferase (754 aa).

Residues 17-20 and lysine 117 contribute to the 5-methyltetrahydropteroyltri-L-glutamate site; that span reads RELK. Residues 431–433 and glutamate 484 each bind L-homocysteine; that span reads IGS. Residues 431–433 and glutamate 484 contribute to the L-methionine site; that span reads IGS. 5-methyltetrahydropteroyltri-L-glutamate-binding positions include 515 to 516 and tryptophan 561; that span reads RC. Aspartate 599 provides a ligand contact to L-homocysteine. Aspartate 599 provides a ligand contact to L-methionine. Position 605 (glutamate 605) interacts with 5-methyltetrahydropteroyltri-L-glutamate. Residues histidine 641, cysteine 643, and glutamate 665 each contribute to the Zn(2+) site. Histidine 694 serves as the catalytic Proton donor. Cysteine 726 contributes to the Zn(2+) binding site.

It belongs to the vitamin-B12 independent methionine synthase family. Zn(2+) serves as cofactor.

It catalyses the reaction 5-methyltetrahydropteroyltri-L-glutamate + L-homocysteine = tetrahydropteroyltri-L-glutamate + L-methionine. The protein operates within amino-acid biosynthesis; L-methionine biosynthesis via de novo pathway; L-methionine from L-homocysteine (MetE route): step 1/1. Functionally, catalyzes the transfer of a methyl group from 5-methyltetrahydrofolate to homocysteine resulting in methionine formation. The chain is 5-methyltetrahydropteroyltriglutamate--homocysteine methyltransferase from Pectobacterium atrosepticum (strain SCRI 1043 / ATCC BAA-672) (Erwinia carotovora subsp. atroseptica).